The chain runs to 394 residues: Elongation factor Tu (394 aa).

Positions 10–204 constitute a tr-type G domain; sequence KPHLNVGTIG…TLDTYIEDPV (195 aa). Residues 19–26 are G1; it reads GHVDHGKT. 19–26 provides a ligand contact to GTP; sequence GHVDHGKT. Residue Thr26 coordinates Mg(2+). A G2 region spans residues 60–64; sequence GITIK. The interval 81–84 is G3; that stretch reads DCPG. GTP-binding positions include 81–85 and 136–139; these read DCPGH and NKCD. The G4 stretch occupies residues 136-139; the sequence is NKCD. A G5 region spans residues 174-176; sequence SAL.

This sequence belongs to the TRAFAC class translation factor GTPase superfamily. Classic translation factor GTPase family. EF-Tu/EF-1A subfamily. As to quaternary structure, monomer.

The protein resides in the cytoplasm. It carries out the reaction GTP + H2O = GDP + phosphate + H(+). Its function is as follows. GTP hydrolase that promotes the GTP-dependent binding of aminoacyl-tRNA to the A-site of ribosomes during protein biosynthesis. The polypeptide is Elongation factor Tu (Onion yellows phytoplasma (strain OY-M)).